A 549-amino-acid chain; its full sequence is Urocanate hydratase (549 aa).

NAD(+) is bound by residues 46-47, Gln-124, 170-172, Glu-190, Arg-195, 236-237, 257-261, 267-268, and Tyr-316; these read GG, GMG, NA, QTSAH, and YV. Cys-404 is a catalytic residue. Gly-486 is a binding site for NAD(+).

The protein belongs to the urocanase family. The cofactor is NAD(+).

The protein localises to the cytoplasm. The enzyme catalyses 4-imidazolone-5-propanoate = trans-urocanate + H2O. It participates in amino-acid degradation; L-histidine degradation into L-glutamate; N-formimidoyl-L-glutamate from L-histidine: step 2/3. Functionally, catalyzes the conversion of urocanate to 4-imidazolone-5-propionate. This Caldanaerobacter subterraneus subsp. tengcongensis (strain DSM 15242 / JCM 11007 / NBRC 100824 / MB4) (Thermoanaerobacter tengcongensis) protein is Urocanate hydratase.